A 77-amino-acid chain; its full sequence is Putative defensin-like protein 120 (77 aa).

The N-terminal stretch at 1-26 (MTQKATILAIFMVVLVLGLETKETQG) is a signal peptide. 4 cysteine pairs are disulfide-bonded: Cys-30–Cys-75, Cys-39–Cys-60, Cys-44–Cys-69, and Cys-48–Cys-71.

It belongs to the DEFL family.

Its subcellular location is the secreted. The sequence is that of Putative defensin-like protein 120 (LCR56) from Arabidopsis thaliana (Mouse-ear cress).